We begin with the raw amino-acid sequence, 485 residues long: Putative ATP-dependent RNA helicase ste13 (485 aa).

Residues 16–38 (DRESFKGQMKAQPVDMRPKTEDV) are disordered. Residues 44-72 (TEFEDYYLKRELLMGIFEAGFERPSPIQE) carry the Q motif motif. A Helicase ATP-binding domain is found at 75–245 (IPIALSGRDI…DKHLNKPYEI (171 aa)). 88–95 (AKNGTGKT) lines the ATP pocket. Positions 193–196 (DEAD) match the DEAD box motif. Residues 255–415 (GVTQYYAFVD…PIPPSIDPSL (161 aa)) form the Helicase C-terminal domain. The disordered stretch occupies residues 437–485 (LAAQQAKGQEGYHNRPNNNRGGHPRGGGNRGGYRQSNRQPRYRGQQKAD).

This sequence belongs to the DEAD box helicase family. DDX6/DHH1 subfamily.

It localises to the cytoplasm. Its subcellular location is the P-body. The enzyme catalyses ATP + H2O = ADP + phosphate + H(+). Its function is as follows. ATP-dependent RNA helicase involved in mRNA turnover, and more specifically in mRNA decapping. Is involved in G1/S DNA-damage checkpoint recovery, probably through the regulation of the translational status of a subset of mRNAs. May also have a role in translation and mRNA nuclear export. The chain is Putative ATP-dependent RNA helicase ste13 (ste13) from Schizosaccharomyces pombe (strain 972 / ATCC 24843) (Fission yeast).